Here is a 269-residue protein sequence, read N- to C-terminus: Ubiquinone/menaquinone biosynthesis C-methyltransferase UbiE (269 aa).

S-adenosyl-L-methionine-binding positions include Thr92, Asp113, and 141-142; that span reads NA.

This sequence belongs to the class I-like SAM-binding methyltransferase superfamily. MenG/UbiE family.

The enzyme catalyses a 2-demethylmenaquinol + S-adenosyl-L-methionine = a menaquinol + S-adenosyl-L-homocysteine + H(+). It catalyses the reaction a 2-methoxy-6-(all-trans-polyprenyl)benzene-1,4-diol + S-adenosyl-L-methionine = a 5-methoxy-2-methyl-3-(all-trans-polyprenyl)benzene-1,4-diol + S-adenosyl-L-homocysteine + H(+). It participates in quinol/quinone metabolism; menaquinone biosynthesis; menaquinol from 1,4-dihydroxy-2-naphthoate: step 2/2. It functions in the pathway cofactor biosynthesis; ubiquinone biosynthesis. Methyltransferase required for the conversion of demethylmenaquinol (DMKH2) to menaquinol (MKH2) and the conversion of 2-polyprenyl-6-methoxy-1,4-benzoquinol (DDMQH2) to 2-polyprenyl-3-methyl-6-methoxy-1,4-benzoquinol (DMQH2). The protein is Ubiquinone/menaquinone biosynthesis C-methyltransferase UbiE of Brucella canis (strain ATCC 23365 / NCTC 10854 / RM-666).